A 393-amino-acid chain; its full sequence is Cytotoxic and regulatory T-cell molecule (393 aa).

The signal sequence occupies residues 1-17 (MWWRVLSLLAWFPLQEA). The 97-residue stretch at 18–114 (SLTNHTETIT…VSTKEVKVIV (97 aa)) folds into the Ig-like V-type domain. Topologically, residues 18–287 (SLTNHTETIT…YLGLARKKSG (270 aa)) are extracellular. N-linked (GlcNAc...) asparagine glycans are attached at residues Asn-21, Asn-87, and Asn-178. Cystine bridges form between Cys-38–Cys-98 and Cys-141–Cys-196. The Ig-like C2-type domain maps to 118–210 (PFKPILEASV…RGLQGRKLVA (93 aa)). Residues 225 to 273 (SDALERNSLSSQDPQQPTSTVSVTEDSSTSEIDKEEKEQTTQDPDLTTE) form a disordered region. The segment covering 231-241 (NSLSSQDPQQP) has biased composition (polar residues). Over residues 242-254 (TSTVSVTEDSSTS) the composition is skewed to low complexity. Basic and acidic residues predominate over residues 255–264 (EIDKEEKEQT). A helical membrane pass occupies residues 288–308 (ILLLTLVSFLIFILFIIVQLF). Residues 309-393 (IMKLRKAHVI…KHIQVPESIV (85 aa)) lie on the Cytoplasmic side of the membrane. Basic and acidic residues-rich tracts occupy residues 328-348 (HTLE…EEKN) and 374-387 (ENVQ…KHIQ). 2 disordered regions span residues 328–354 (HTLE…SSHP) and 374–393 (ENVQ…ESIV). Residues 390 to 393 (ESIV) carry the PDZ-binding motif.

This sequence belongs to the nectin family. Monomer. May form homodimer (via Ig-like V-type domain). Interacts (via Ig-like V-type domain) with CADM1 (via Ig-like V-type domain); the interaction competes with CRTAM homodimerization and CADM1 homodimerization. Interacts (via PDZ-binding motif) with SCRIB (via PDZ domain 3); the interaction promotes CRTAM and SCRIB polarization in a subset of CD4+ T-cells. As to expression, in the immune system, expression is restricted to activated class-I MHC-restricted cells, including NKT and CD8 T-cells. Strongly expressed in spleen, thymus, small intestine, peripheral blood leukocyte, and in Purkinje neurons in cerebellum. Expressed at much lower levels in testis, ovary, colon, lung and lymphoid tissues.

Its subcellular location is the cell membrane. Functionally, mediates heterophilic cell-cell adhesion which regulates the activation, differentiation and tissue retention of various T-cell subsets. Interaction with CADM1 promotes natural killer (NK) cell cytotoxicity and IFNG/interferon-gamma secretion by CD8+ T-cells in vitro as well as NK cell-mediated rejection of tumors expressing CADM1 in vivo. Regulates CD8+ T-cell proliferation in response to T-cell receptor (TCR) activation. Appears to be dispensable for CD8+ T-cell-mediated cytotoxicity. Interaction with SCRIB promotes the late phase of cellular polarization of a subset of CD4+ T-cells, which in turn regulates TCR-mediated proliferation and IFNG, IL17 and IL22 production. By interacting with CADM1 on CD8+ dendritic cells, regulates the retention of activated CD8+ T-cells within the draining lymph node. Required for the intestinal retention of intraepithelial CD4+ CD8+ T-cells and, to a lesser extent, intraepithelial and lamina propria CD8+ T-cells and CD4+ T-cells. Interaction with CADM1 promotes the adhesion to gut-associated CD103+ dendritic cells, which may facilitate the expression of gut-homing and adhesion molecules on T-cells and the conversion of CD4+ T-cells into CD4+ CD8+ T-cells. The polypeptide is Cytotoxic and regulatory T-cell molecule (Homo sapiens (Human)).